The primary structure comprises 207 residues: MLHHNQMVLMGLLNMLKISIQERQFVYSWICSLLSKELTQDQLAHYQRGDFDSLFAFLKELGFTEQTEQLIATLRPMEFQQLELAADFAHTFLLEGNISAIPYMSAYLQGEELGVALNLVDQWMTHYQLGVNREQNEPSDHVSVLLAILIRLIGEQPFHVQQDFAQKALLNWLPEFVRKANNTSCETKFYAMLCNLFLAFMTEDFAV.

This sequence belongs to the TorD/DmsD family. TorD subfamily.

Its subcellular location is the cytoplasm. Involved in the biogenesis of TorA. Acts on TorA before the insertion of the molybdenum cofactor and, as a result, probably favors a conformation of the apoenzyme that is competent for acquiring the cofactor. The protein is Chaperone protein TorD of Aggregatibacter aphrophilus (strain NJ8700) (Haemophilus aphrophilus).